The primary structure comprises 521 residues: Endoplasmic reticulum mannosyl-oligosaccharide 1,2-alpha-mannosidase (521 aa).

Topologically, residues 1 to 8 (MVKRRTVK) are cytoplasmic. A helical; Signal-anchor for type II membrane protein membrane pass occupies residues 9 to 31 (YFLRRILALFVLCVPIYYLYTTV). At 32 to 521 (QRPPGYTKLK…IENNMDLYTV (490 aa)) the chain is on the lumenal side. 5 N-linked (GlcNAc...) asparagine glycosylation sites follow: Asn-114, Asn-167, Asn-300, Asn-342, and Asn-378. The cysteines at positions 330 and 373 are disulfide-linked. Glu-387 acts as the Proton donor in catalysis. Residue Asn-499 is glycosylated (N-linked (GlcNAc...) asparagine). Thr-504 contacts Ca(2+).

Belongs to the glycosyl hydrolase 47 family. Requires Ca(2+) as cofactor.

The protein localises to the membrane. It carries out the reaction N(4)-(alpha-D-Man-(1-&gt;2)-alpha-D-Man-(1-&gt;2)-alpha-D-Man-(1-&gt;3)-[alpha-D-Man-(1-&gt;2)-alpha-D-Man-(1-&gt;3)-[alpha-D-Man-(1-&gt;2)-alpha-D-Man-(1-&gt;6)]-alpha-D-Man-(1-&gt;6)]-beta-D-Man-(1-&gt;4)-beta-D-GlcNAc-(1-&gt;4)-beta-D-GlcNAc)-L-asparaginyl-[protein] (N-glucan mannose isomer 9A1,2,3B1,2,3) + 4 H2O = N(4)-(alpha-D-Man-(1-&gt;3)-[alpha-D-Man-(1-&gt;3)-[alpha-D-Man-(1-&gt;6)]-alpha-D-Man-(1-&gt;6)]-beta-D-Man-(1-&gt;4)-beta-D-GlcNAc-(1-&gt;4)-beta-D-GlcNAc)-L-asparaginyl-[protein] (N-glucan mannose isomer 5A1,2) + 4 beta-D-mannose. The enzyme catalyses N(4)-(alpha-D-Man-(1-&gt;2)-alpha-D-Man-(1-&gt;2)-alpha-D-Man-(1-&gt;3)-[alpha-D-Man-(1-&gt;3)-[alpha-D-Man-(1-&gt;2)-alpha-D-Man-(1-&gt;6)]-alpha-D-Man-(1-&gt;6)]-beta-D-Man-(1-&gt;4)-beta-D-GlcNAc-(1-&gt;4)-beta-D-GlcNAc)-L-asparaginyl-[protein] (N-glucan mannose isomer 8A1,2,3B1,3) + 3 H2O = N(4)-(alpha-D-Man-(1-&gt;3)-[alpha-D-Man-(1-&gt;3)-[alpha-D-Man-(1-&gt;6)]-alpha-D-Man-(1-&gt;6)]-beta-D-Man-(1-&gt;4)-beta-D-GlcNAc-(1-&gt;4)-beta-D-GlcNAc)-L-asparaginyl-[protein] (N-glucan mannose isomer 5A1,2) + 3 beta-D-mannose. It participates in protein modification; protein glycosylation. Inhibited by kifunensine. Involved in glycoprotein quality control as it is important for the targeting of misfolded glycoproteins for degradation. It trims a single alpha-1,2-linked mannose residue from Man(9)GlcNAc(2) to produce Man(8)GlcNAc(2) with low efficiency. This is Endoplasmic reticulum mannosyl-oligosaccharide 1,2-alpha-mannosidase from Schizosaccharomyces pombe (strain 972 / ATCC 24843) (Fission yeast).